The primary structure comprises 761 residues: Signal transducer and transcription activator (761 aa).

In terms of domain architecture, SH2 spans 594–658 (WKAGCIMGFI…APWTARDFQV (65 aa)). A Phosphotyrosine; by JAK modification is found at Y711.

This sequence belongs to the transcription factor STAT family. In terms of assembly, forms a homodimer or a heterodimer with a related family member. Tyrosine phosphorylated by hopscotch. Phosphorylation is required for DNA-binding activity and dimerization.

It is found in the cytoplasm. It localises to the nucleus. In terms of biological role, might play a role in signal transduction and activation of transcription. Plays an important role in the segmental pattern formation in the early embryo by activating specific stripes of pair rule gene expression in early development as part of the Janus kinase-STAT pathway. Might play a role in male germline stem cell maintenance. This chain is Signal transducer and transcription activator (Stat92E), found in Drosophila melanogaster (Fruit fly).